The following is an 840-amino-acid chain: Leucine--tRNA ligase (840 aa).

The 'HIGH' region signature appears at 44–55 (PYPSANGLHVGH). The short motif at 617 to 621 (KMSKS) is the 'KMSKS' region element. K620 provides a ligand contact to ATP.

The protein belongs to the class-I aminoacyl-tRNA synthetase family.

It is found in the cytoplasm. The enzyme catalyses tRNA(Leu) + L-leucine + ATP = L-leucyl-tRNA(Leu) + AMP + diphosphate. The protein is Leucine--tRNA ligase of Borreliella burgdorferi (strain ATCC 35210 / DSM 4680 / CIP 102532 / B31) (Borrelia burgdorferi).